A 396-amino-acid polypeptide reads, in one-letter code: Subtelomeric hrmA-associated cluster protein AFUB_079040 (396 aa).

Disordered stretches follow at residues 1–32 and 347–396; these read MANKKKPSIKKSVNEPNPHLKQSHASGSQQSL and YPEN…ECGR. A compositionally biased stretch (polar residues) spans 23 to 32; it reads SHASGSQQSL. A compositionally biased stretch (basic residues) spans 367–380; the sequence is SKKKKDKKKKKSNK.

Part of the subtelomeric hrmA-associated cluster (HAC) containing genes that alter the hyphal surface (such as reduced total chitin or increased beta-glucan exposure) and perturb inter-hyphal interactions within the developing biofilms, resulting in a loss of vertically aligned polarized growing filaments. Consequently, this hypoxia-typic morphotype (called H-MORPH) with altered biofilm architecture leads to increased hypoxia fitness, increased host inflammation, rapid disease progression, and mortality in a murine model of invasive aspergillosis. This is Subtelomeric hrmA-associated cluster protein AFUB_079040 from Aspergillus fumigatus (strain CBS 144.89 / FGSC A1163 / CEA10) (Neosartorya fumigata).